A 587-amino-acid polypeptide reads, in one-letter code: Aspartate--tRNA ligase (587 aa).

Residue Glu-173 participates in L-aspartate binding. The aspartate stretch occupies residues 197 to 200; it reads QTLK. Residue Arg-219 coordinates L-aspartate. Residues 219–221 and Gln-228 each bind ATP; that span reads RDE. An L-aspartate-binding site is contributed by His-446. Glu-480 is an ATP binding site. Arg-487 contributes to the L-aspartate binding site. ATP is bound at residue 532–535; it reads GLDR.

It belongs to the class-II aminoacyl-tRNA synthetase family. Type 1 subfamily. Homodimer.

The protein localises to the cytoplasm. It catalyses the reaction tRNA(Asp) + L-aspartate + ATP = L-aspartyl-tRNA(Asp) + AMP + diphosphate. Its function is as follows. Catalyzes the attachment of L-aspartate to tRNA(Asp) in a two-step reaction: L-aspartate is first activated by ATP to form Asp-AMP and then transferred to the acceptor end of tRNA(Asp). This chain is Aspartate--tRNA ligase, found in Bacteroides thetaiotaomicron (strain ATCC 29148 / DSM 2079 / JCM 5827 / CCUG 10774 / NCTC 10582 / VPI-5482 / E50).